Here is a 491-residue protein sequence, read N- to C-terminus: Ketol-acid reductoisomerase (NADP(+)) (491 aa).

A KARI N-terminal Rossmann domain is found at 16 to 207; the sequence is IKKCRFMKEN…GGHRAGVLES (192 aa). NADP(+)-binding positions include 44–47, lysine 67, serine 77, and 107–109; these read CGSQ and DKQ. Residue histidine 131 is part of the active site. Residue glycine 157 participates in NADP(+) binding. KARI C-terminal knotted domains lie at 208 to 344 and 345 to 484; these read SFIA…NILS and YSEK…MKEM. 4 residues coordinate Mg(2+): aspartate 216, glutamate 220, glutamate 389, and glutamate 393. Substrate is bound at residue serine 414.

The protein belongs to the ketol-acid reductoisomerase family. Mg(2+) serves as cofactor.

The catalysed reaction is (2R)-2,3-dihydroxy-3-methylbutanoate + NADP(+) = (2S)-2-acetolactate + NADPH + H(+). It catalyses the reaction (2R,3R)-2,3-dihydroxy-3-methylpentanoate + NADP(+) = (S)-2-ethyl-2-hydroxy-3-oxobutanoate + NADPH + H(+). The protein operates within amino-acid biosynthesis; L-isoleucine biosynthesis; L-isoleucine from 2-oxobutanoate: step 2/4. It participates in amino-acid biosynthesis; L-valine biosynthesis; L-valine from pyruvate: step 2/4. Involved in the biosynthesis of branched-chain amino acids (BCAA). Catalyzes an alkyl-migration followed by a ketol-acid reduction of (S)-2-acetolactate (S2AL) to yield (R)-2,3-dihydroxy-isovalerate. In the isomerase reaction, S2AL is rearranged via a Mg-dependent methyl migration to produce 3-hydroxy-3-methyl-2-ketobutyrate (HMKB). In the reductase reaction, this 2-ketoacid undergoes a metal-dependent reduction by NADPH to yield (R)-2,3-dihydroxy-isovalerate. The protein is Ketol-acid reductoisomerase (NADP(+)) of Buchnera aphidicola subsp. Schizaphis graminum (strain Sg).